A 1799-amino-acid chain; its full sequence is Bromodomain and WD repeat-containing protein 3 (1799 aa).

WD repeat units lie at residues 170–209, 213–251, 255–297, 307–347, 353–393, 400–452, 456–495, and 502–542; these read IKMHKRILGHLSSVYCVAFDRSGRRIFTGSDDCLVKIWAT, RLLATLRGHSAEISDMAVNYENTLIAAGSCDKVVRVWCL, APVA…FWQW, RPVK…IYYL, EKIA…IWQY, SIVL…VWNS, QLLHTLSGHDDEVFVLEAHPFDQRIILSAGHDGNIFIWDL, and RNYF…LFGF. Serine 693 is modified (phosphoserine). Positions 766–912 are disordered; that stretch reads KKPSYPIQRN…KKKKGGLVSM (147 aa). Positions 784–794 are enriched in basic residues; sequence SLRRTQRKRQH. Residues 795 to 816 are compositionally biased toward polar residues; it reads TYLTRSNIEHNSQASSQTSGVQ. The segment covering 817 to 828 has biased composition (acidic residues); that stretch reads EDSDSSSEEDET. The span at 845 to 858 shows a compositional bias: low complexity; the sequence is SESSSSDSSSEYSD. Positions 875–884 are enriched in polar residues; it reads RQATQKIYSS. Phosphoserine is present on residues serine 884 and serine 885. Residues 897–907 are compositionally biased toward basic residues; the sequence is KKPKQTKKKKG. Positions 1136–1243 constitute a Bromo 1 domain; it reads WGAHSRDEEC…DVLLRFIGDQ (108 aa). Disordered regions lie at residues 1258–1291, 1321–1366, 1435–1482, and 1517–1723; these read EDPDSSDLEEDSEMVDLDSDGPGTSSGRRAKCRG, EPFR…IDTP, IQSQ…QNTS, and SPSS…AKRA. A compositionally biased stretch (acidic residues) spans 1260–1276; sequence PDSSDLEEDSEMVDLDS. In terms of domain architecture, Bromo 2 spans 1298–1427; it reads CNPDAWKKQC…ALFENHIKNI (130 aa). Residues 1333 to 1348 show a composition bias toward low complexity; it reads PVQQQQEGESSQSVPP. The segment covering 1438–1450 has biased composition (basic residues); sequence QKRRRPRYRKRLR. Composition is skewed to low complexity over residues 1451-1463 and 1517-1530; these read SSSSSLSSSRAPS and SPSSFSGYSRSGNS. Phosphoserine is present on residues serine 1574 and serine 1576. Residues 1584–1596 are compositionally biased toward basic and acidic residues; sequence GEEKEMKETKEQV. Over residues 1598–1623 the composition is skewed to low complexity; sequence LSSSESGELGSSLSSESTSGSDSDSE. The span at 1624 to 1640 shows a compositional bias: basic and acidic residues; sequence STSRTDQDYVDGDHDYS. Basic residues-rich tracts occupy residues 1646 to 1663 and 1681 to 1694; these read RPKRKLRKQHTNGKRNWK and RGGRGRGGRGRGGR. The residue at position 1760 (serine 1760) is a Phosphoserine.

In terms of biological role, plays a role in the regulation of cell morphology and cytoskeletal organization. Required in the control of cell shape. This chain is Bromodomain and WD repeat-containing protein 3 (Brwd3), found in Mus musculus (Mouse).